The following is a 136-amino-acid chain: Large ribosomal subunit protein uL22 (136 aa).

It belongs to the universal ribosomal protein uL22 family. Part of the 50S ribosomal subunit.

In terms of biological role, this protein binds specifically to 23S rRNA; its binding is stimulated by other ribosomal proteins, e.g. L4, L17, and L20. It is important during the early stages of 50S assembly. It makes multiple contacts with different domains of the 23S rRNA in the assembled 50S subunit and ribosome. The globular domain of the protein is located near the polypeptide exit tunnel on the outside of the subunit, while an extended beta-hairpin is found that lines the wall of the exit tunnel in the center of the 70S ribosome. The polypeptide is Large ribosomal subunit protein uL22 (Bacteroides fragilis (strain ATCC 25285 / DSM 2151 / CCUG 4856 / JCM 11019 / LMG 10263 / NCTC 9343 / Onslow / VPI 2553 / EN-2)).